A 492-amino-acid chain; its full sequence is 5-taurinomethyluridine-[tRNA] synthase subunit GTPB3, mitochondrial (492 aa).

The N-terminal 20 residues, 1-20, are a transit peptide targeting the mitochondrion; the sequence is MWRGLSALVTRPASAPLRLC. The 5,10-methylenetetrahydrofolate site is built by Arg52, Glu112, and Lys152. One can recognise a TrmE-type G domain in the interval 249-416; that stretch reads GANVVVAGPP…LLQALKTELA (168 aa). GTP is bound by residues 256–263, 282–286, 303–306, and 374–377; these read GPPNAGKS, GTTRD, DTAG, and NKSD. Asn259 contacts K(+). Residues Ser263 and Thr284 each coordinate Mg(2+). Residue Lys492 coordinates 5,10-methylenetetrahydrofolate.

This sequence belongs to the TRAFAC class TrmE-Era-EngA-EngB-Septin-like GTPase superfamily. TrmE GTPase family. Homodimer; forms a dimer in the presence of potassium. Interacts with MTO1; forms the GTPBP3-MTO1 complex composed of homodimers of GTPBP3 and MTO1. The cofactor is K(+).

The protein localises to the mitochondrion. The enzyme catalyses GTP + H2O = GDP + phosphate + H(+). Functionally, GTPase component of the GTPBP3-MTO1 complex that catalyzes the 5-taurinomethyluridine (taum(5)U) modification at the 34th wobble position (U34) of mitochondrial tRNAs (mt-tRNAs), which plays a role in mt-tRNA decoding and mitochondrial translation. Taum(5)U formation on mammalian mt-tRNA requires the presence of both GTPBP3-mediated GTPase activity and MTO1 catalytic activity. In Rattus norvegicus (Rat), this protein is 5-taurinomethyluridine-[tRNA] synthase subunit GTPB3, mitochondrial.